We begin with the raw amino-acid sequence, 40 residues long: Antimicrobial peptide 2 (40 aa).

The Chitin-binding type-1 domain maps to 1 to 40 (AQCGAQGGGATCPGGLCCSQWGWCGSTPKYCGAGCQSNCR). 4 cysteine pairs are disulfide-bonded: Cys3–Cys18, Cys12–Cys24, Cys17–Cys31, and Cys35–Cys39.

Post-translationally, not glycosylated.

Its function is as follows. Antimicrobial peptide active against plant pathogenic fungi and Gram-negative and -positive bacteria. The protein is Antimicrobial peptide 2 of Fagopyrum esculentum (Common buckwheat).